The chain runs to 112 residues: Nucleoid-associated protein RER_03900 (112 aa).

Belongs to the YbaB/EbfC family. Homodimer.

Its subcellular location is the cytoplasm. The protein resides in the nucleoid. In terms of biological role, binds to DNA and alters its conformation. May be involved in regulation of gene expression, nucleoid organization and DNA protection. The polypeptide is Nucleoid-associated protein RER_03900 (Rhodococcus erythropolis (strain PR4 / NBRC 100887)).